The primary structure comprises 430 residues: Isochorismate synthase MenF (430 aa).

The active-site Proton acceptor is Lys-187. The active-site Proton donor is the Glu-237. The Mg(2+) site is built by Glu-281 and Glu-414.

This sequence belongs to the isochorismate synthase family. Mg(2+) is required as a cofactor.

It carries out the reaction chorismate = isochorismate. Its pathway is quinol/quinone metabolism; 1,4-dihydroxy-2-naphthoate biosynthesis; 1,4-dihydroxy-2-naphthoate from chorismate: step 1/7. It functions in the pathway quinol/quinone metabolism; menaquinone biosynthesis. In terms of biological role, catalyzes the conversion of chorismate to isochorismate. In Haemophilus influenzae (strain ATCC 51907 / DSM 11121 / KW20 / Rd), this protein is Isochorismate synthase MenF.